The following is a 172-amino-acid chain: Adenine phosphoribosyltransferase (172 aa).

This sequence belongs to the purine/pyrimidine phosphoribosyltransferase family. Homodimer.

It is found in the cytoplasm. The enzyme catalyses AMP + diphosphate = 5-phospho-alpha-D-ribose 1-diphosphate + adenine. It functions in the pathway purine metabolism; AMP biosynthesis via salvage pathway; AMP from adenine: step 1/1. In terms of biological role, catalyzes a salvage reaction resulting in the formation of AMP, that is energically less costly than de novo synthesis. In Gloeothece citriformis (strain PCC 7424) (Cyanothece sp. (strain PCC 7424)), this protein is Adenine phosphoribosyltransferase.